The primary structure comprises 485 residues: Hexokinase (485 aa).

Position 15 is a phosphoserine (Ser-15). In terms of domain architecture, Hexokinase spans Ala-21 to Cys-468. Residues Thr-75 to Ile-208 are hexokinase small subdomain. Lys-111 provides a ligand contact to ATP. Positions Pro-151–Phe-177 are glucose-binding. The hexokinase large subdomain stretch occupies residues Asn-209–Asp-457.

Monomer and homodimer. The monomeric form is active, the homodimeric form inactive.

It catalyses the reaction a D-hexose + ATP = a D-hexose 6-phosphate + ADP + H(+). The enzyme catalyses D-fructose + ATP = D-fructose 6-phosphate + ADP + H(+). The catalysed reaction is D-glucose + ATP = D-glucose 6-phosphate + ADP + H(+). Its pathway is carbohydrate metabolism; hexose metabolism. The protein operates within carbohydrate degradation; glycolysis; D-glyceraldehyde 3-phosphate and glycerone phosphate from D-glucose: step 1/4. In terms of biological role, catalyzes the phosphorylation of hexose, such as D-glucose and D-fructose, to hexose 6-phosphate (D-glucose 6-phosphate and D-fructose 6-phosphate, respectively). Has higher affinity for D-glucose. Mediates the initial step of glycolysis by catalyzing phosphorylation of D-glucose to D-glucose 6-phosphate. The protein is Hexokinase (RAG5) of Kluyveromyces lactis (strain ATCC 8585 / CBS 2359 / DSM 70799 / NBRC 1267 / NRRL Y-1140 / WM37) (Yeast).